Reading from the N-terminus, the 463-residue chain is Glycine--tRNA ligase (463 aa).

Arginine 98 and glutamate 174 together coordinate substrate. ATP-binding positions include 206-208 (RNE), 216-221 (FRTREF), 290-291 (EL), and 334-337 (GADR). A substrate-binding site is contributed by 221-225 (FEQME). 330-334 (EPSLG) provides a ligand contact to substrate.

This sequence belongs to the class-II aminoacyl-tRNA synthetase family. In terms of assembly, homodimer.

The protein localises to the cytoplasm. The enzyme catalyses tRNA(Gly) + glycine + ATP = glycyl-tRNA(Gly) + AMP + diphosphate. Functionally, catalyzes the attachment of glycine to tRNA(Gly). The chain is Glycine--tRNA ligase from Staphylococcus saprophyticus subsp. saprophyticus (strain ATCC 15305 / DSM 20229 / NCIMB 8711 / NCTC 7292 / S-41).